The following is a 503-amino-acid chain: Glycoprotein 3-alpha-L-fucosyltransferase A (503 aa).

The Cytoplasmic portion of the chain corresponds to 1-10; the sequence is MRRPKISLKK. Residues 11–28 traverse the membrane as a helical; Signal-anchor for type II membrane protein segment; it reads YFYLTLICALLLIFGFSL. Topologically, residues 29–503 are lumenal; that stretch reads KEREIWKTLS…KDVISDSSDD (475 aa). The interval 44 to 71 is disordered; it reads ITTQQQQHQHLHQLQSMDEEHPMATSST. Over residues 47-58 the composition is skewed to low complexity; the sequence is QQQQHQHLHQLQ. N-linked (GlcNAc...) asparagine glycans are attached at residues asparagine 262, asparagine 295, and asparagine 299.

Belongs to the glycosyltransferase 10 family. It depends on Mn(2+) as a cofactor.

It is found in the golgi apparatus. Its subcellular location is the golgi stack membrane. It carries out the reaction N(4)-{beta-D-GlcNAc-(1-&gt;2)-alpha-D-Man-(1-&gt;3)-[beta-D-GlcNAc-(1-&gt;2)-alpha-D-Man-(1-&gt;6)]-beta-D-Man-(1-&gt;4)-beta-D-GlcNAc-(1-&gt;4)-beta-D-GlcNAc}-L-asparaginyl-[protein] + GDP-beta-L-fucose = N(4)-{beta-D-GlcNAc-(1-&gt;2)-alpha-D-Man-(1-&gt;3)-[beta-D-GlcNAc-(1-&gt;2)-alpha-D-Man-(1-&gt;6)]-beta-D-Man-(1-&gt;4)-beta-D-GlcNAc-(1-&gt;4)-[alpha-L-Fuc(1-&gt;3)]-beta-D-GlcNAc}-L-asparaginyl-[protein] + GDP + H(+). It participates in protein modification; protein glycosylation. In terms of biological role, catalyzes alpha-1,3 glycosidic linkages of N-glycans. Plays a role in neuronal development by promoting ventral nerve cord formation, possibly by promoting interactions between migrating cells and the extracellular matrix or by promoting neural activity. In Drosophila melanogaster (Fruit fly), this protein is Glycoprotein 3-alpha-L-fucosyltransferase A (FucTA).